Here is an 85-residue protein sequence, read N- to C-terminus: Large ribosomal subunit protein bL27 (85 aa).

A disordered region spans residues Met-1 to Leu-21.

The protein belongs to the bacterial ribosomal protein bL27 family.

This is Large ribosomal subunit protein bL27 from Nitratiruptor sp. (strain SB155-2).